The sequence spans 343 residues: L-threonine 3-dehydrogenase (343 aa).

Cys38 lines the Zn(2+) pocket. Active-site charge relay system residues include Thr40 and His43. Positions 63, 64, 93, 96, 99, and 107 each coordinate Zn(2+). NAD(+)-binding positions include Ile175, Asp195, Arg200, 262-264, and 286-287; these read LGL and IY.

Belongs to the zinc-containing alcohol dehydrogenase family. In terms of assembly, homotetramer. The cofactor is Zn(2+).

It is found in the cytoplasm. The catalysed reaction is L-threonine + NAD(+) = (2S)-2-amino-3-oxobutanoate + NADH + H(+). The protein operates within amino-acid degradation; L-threonine degradation via oxydo-reductase pathway; glycine from L-threonine: step 1/2. Its function is as follows. Catalyzes the NAD(+)-dependent oxidation of L-threonine to 2-amino-3-ketobutyrate. The sequence is that of L-threonine 3-dehydrogenase from Saccharopolyspora erythraea (strain ATCC 11635 / DSM 40517 / JCM 4748 / NBRC 13426 / NCIMB 8594 / NRRL 2338).